The following is an 877-amino-acid chain: Alanine--tRNA ligase (877 aa).

The Zn(2+) site is built by His567, His571, Cys669, and His673.

Belongs to the class-II aminoacyl-tRNA synthetase family. Zn(2+) is required as a cofactor.

It is found in the cytoplasm. The catalysed reaction is tRNA(Ala) + L-alanine + ATP = L-alanyl-tRNA(Ala) + AMP + diphosphate. Catalyzes the attachment of alanine to tRNA(Ala) in a two-step reaction: alanine is first activated by ATP to form Ala-AMP and then transferred to the acceptor end of tRNA(Ala). Also edits incorrectly charged Ser-tRNA(Ala) and Gly-tRNA(Ala) via its editing domain. The chain is Alanine--tRNA ligase from Rickettsia rickettsii (strain Iowa).